A 145-amino-acid polypeptide reads, in one-letter code: Selenoprotein M (145 aa).

Positions 1–23 are cleaved as a signal peptide; it reads MSILLSPPSLLLLLAALVAPATS. Residues Cys45 and Sec48 each act as nucleophile in the active site. The segment at residues 45 to 48 is a cross-link (cysteinyl-selenocysteine (Cys-Sec)); the sequence is CGGU. Residue Sec48 is a non-standard amino acid, selenocysteine. Positions 125 to 145 are disordered; that stretch reads PPEYLWAPAKPPEEASEHDDL.

This sequence belongs to the selenoprotein M/F family. Widely expressed. Highly expressed in brain.

Its subcellular location is the cytoplasm. It is found in the perinuclear region. The protein localises to the endoplasmic reticulum. The protein resides in the golgi apparatus. Functionally, may function as a thiol-disulfide oxidoreductase that participates in disulfide bond formation. The polypeptide is Selenoprotein M (Mus musculus (Mouse)).